The chain runs to 453 residues: Serine/threonine-protein phosphatase 2A 55 kDa regulatory subunit B delta isoform (453 aa).

WD repeat units lie at residues 32–71, 97–138, 181–219, and 230–270; these read AEADIISTVEFNYSGDLLATGDKGGRVVIFQREQENKGRA, EIEE…KRAE, AHTYHINSISVNSDHETYLSADDLRINLWHLEITDRSFN, and ELTE…LCDR. S285 is subject to Phosphoserine. 3 WD repeats span residues 289-327, 344-385, and 420-452; these read EIISSISDVKFSHSGRYMMTRDYLSVKVWDLNMEGRPVE, ENDC…DVTL, and DFNKKILHTAWHPMESIIAVAATNNLYIFQDKI. Y305 carries the post-translational modification Phosphotyrosine. T308 is modified (phosphothreonine). The disordered stretch occupies residues 385–406; sequence LEASRENSKPRASLKPRKVCSG.

It belongs to the phosphatase 2A regulatory subunit B family. As to quaternary structure, PP2A consists of a common heterodimeric core enzyme, composed of a 36 kDa catalytic subunit (subunit C) and a 65 kDa constant regulatory subunit (PR65 or subunit A), that associates with a variety of regulatory subunits. Proteins that associate with the core dimer include three families of regulatory subunits B (the R2/B/PR55/B55, R3/B''/PR72/PR130/PR59 and R5/B'/B56 families), the 48 kDa variable regulatory subunit, viral proteins, and cell signaling molecules. Interacts with ENSA (when phosphorylated at 'Ser-67') and ARPP19 (when phosphorylated at 'Ser-62'), leading to inhibit PP2A activity. Interacts with IER5. Widely expressed with high levels in brain, heart, placenta, skeletal muscle, testis, thymus and spleen.

Its subcellular location is the cytoplasm. Its function is as follows. Substrate-recognition subunit of protein phosphatase 2A (PP2A) that plays a key role in cell cycle by controlling mitosis entry and exit. Involved in chromosome clustering during late mitosis by mediating dephosphorylation of MKI67. The activity of PP2A complexes containing PPP2R2D (PR55-delta) fluctuate during the cell cycle: the activity is high in interphase and low in mitosis. This chain is Serine/threonine-protein phosphatase 2A 55 kDa regulatory subunit B delta isoform (Ppp2r2d), found in Rattus norvegicus (Rat).